The sequence spans 428 residues: tRNA modification GTPase MnmE (428 aa).

The (6S)-5-formyl-5,6,7,8-tetrahydrofolate site is built by R20, E76, and R116. The 140-residue stretch at 212 to 351 (GFEVAIIGAP…LVEALQDRLL (140 aa)) folds into the TrmE-type G domain. Residue N222 coordinates K(+). Residues 222–227 (NAGKST), 241–247 (SEVAGTT), and 266–269 (DTAG) each bind GTP. Residue S226 participates in Mg(2+) binding. S241, V243, and T246 together coordinate K(+). Residue T247 coordinates Mg(2+). Residue K428 participates in (6S)-5-formyl-5,6,7,8-tetrahydrofolate binding.

This sequence belongs to the TRAFAC class TrmE-Era-EngA-EngB-Septin-like GTPase superfamily. TrmE GTPase family. Homodimer. Heterotetramer of two MnmE and two MnmG subunits. It depends on K(+) as a cofactor.

Its subcellular location is the cytoplasm. In terms of biological role, exhibits a very high intrinsic GTPase hydrolysis rate. Involved in the addition of a carboxymethylaminomethyl (cmnm) group at the wobble position (U34) of certain tRNAs, forming tRNA-cmnm(5)s(2)U34. In Cereibacter sphaeroides (strain ATCC 17025 / ATH 2.4.3) (Rhodobacter sphaeroides), this protein is tRNA modification GTPase MnmE.